The primary structure comprises 344 residues: MTDRVIRVLVVDDSAFMRMVLKDIIDSQPDMKVVGFAKDGLEAVEKAIELKPDVITMDIEMPNLNGIEALKLIMKKAPTRVIMVSSLTEEGAAITIEALRNGAVDFITKPHGSISLTFRQVAPELLEKIRQAMNVDPRTLLFKPKVSRLTITKPAVSGKIVVIGSSTGGPRSLDMIIPNLPKNFPAPIVVVQHMPPGFTKSLAMRLDSTSELTVKEAEDGEEVKPGFVYIAPGDFHLGLKAQNGKVFFFLDKSDKINNVRPAVDFTLDKAAEIYKSKTIAVILTGMGKDGTKGAFKVKFYGGTVIAEDKETCVVFGMPKSVIEEGYADYVLPAYKIPEKLIELV.

The Response regulatory domain maps to 7-124 (RVLVVDDSAF…SLTFRQVAPE (118 aa)). A 4-aspartylphosphate modification is found at Asp58. Residues 154–344 (PAVSGKIVVI…KIPEKLIELV (191 aa)) enclose the CheB-type methylesterase domain. Residues Ser166, His193, and Asp289 contribute to the active site.

It belongs to the CheB family. In terms of processing, phosphorylated by CheA. Phosphorylation of the N-terminal regulatory domain activates the methylesterase activity.

The protein resides in the cytoplasm. It catalyses the reaction [protein]-L-glutamate 5-O-methyl ester + H2O = L-glutamyl-[protein] + methanol + H(+). It carries out the reaction L-glutaminyl-[protein] + H2O = L-glutamyl-[protein] + NH4(+). Its function is as follows. Involved in chemotaxis. Part of a chemotaxis signal transduction system that modulates chemotaxis in response to various stimuli. Catalyzes the demethylation of specific methylglutamate residues introduced into the chemoreceptors (methyl-accepting chemotaxis proteins or MCP) by CheR. Also mediates the irreversible deamidation of specific glutamine residues to glutamic acid. This chain is Protein-glutamate methylesterase/protein-glutamine glutaminase, found in Thermotoga maritima (strain ATCC 43589 / DSM 3109 / JCM 10099 / NBRC 100826 / MSB8).